Consider the following 185-residue polypeptide: Peptidyl-tRNA hydrolase (185 aa).

Y14 serves as a coordination point for tRNA. H19 (proton acceptor) is an active-site residue. The tRNA site is built by Y64, N66, and N112.

The protein belongs to the PTH family. As to quaternary structure, monomer.

It is found in the cytoplasm. It carries out the reaction an N-acyl-L-alpha-aminoacyl-tRNA + H2O = an N-acyl-L-amino acid + a tRNA + H(+). Its function is as follows. Hydrolyzes ribosome-free peptidyl-tRNAs (with 1 or more amino acids incorporated), which drop off the ribosome during protein synthesis, or as a result of ribosome stalling. In terms of biological role, catalyzes the release of premature peptidyl moieties from peptidyl-tRNA molecules trapped in stalled 50S ribosomal subunits, and thus maintains levels of free tRNAs and 50S ribosomes. The chain is Peptidyl-tRNA hydrolase from Lactobacillus helveticus (strain DPC 4571).